The following is a 668-amino-acid chain: S-adenosyl-L-methionine-dependent tRNA 4-demethylwyosine synthase TYW1B (668 aa).

Residues 37–191 form the Flavodoxin-like domain; it reads CVQIVIEMQG…NFRAWKTKFI (155 aa). Residues 43–47 and 130–162 contribute to the FMN site; these read EMQGF and VFGLGNSAYASHFNKVGKNVDKWLWMLGVHRVM. Positions 202 to 269 are disordered; it reads RKKSCGGHCK…QSLNSIVDVE (68 aa). Basic and acidic residues-rich tracts occupy residues 213 to 223 and 233 to 243; these read GKCESHQHGSE and DELHHRDTKEE. A compositionally biased stretch (acidic residues) spans 244–255; that stretch reads EPFESSSEEEFG. One can recognise a Radical SAM core domain in the interval 336–580; that stretch reads LWNESHRCME…VDLIPEYEIA (245 aa). [4Fe-4S] cluster is bound by residues C352, C356, and C359.

This sequence belongs to the TYW1 family. Requires [4Fe-4S] cluster as cofactor.

It carries out the reaction N(1)-methylguanosine(37) in tRNA(Phe) + pyruvate + S-adenosyl-L-methionine = 4-demethylwyosine(37) in tRNA(Phe) + 5'-deoxyadenosine + L-methionine + CO2 + H2O. The protein operates within tRNA modification; wybutosine-tRNA(Phe) biosynthesis. Probable component of the wybutosine biosynthesis pathway. Wybutosine is a hyper modified guanosine with a tricyclic base found at the 3'-position adjacent to the anticodon of eukaryotic phenylalanine tRNA. Catalyzes the condensation of N-methylguanine with 2 carbon atoms from pyruvate to form the tricyclic 4-demethylwyosine, an intermediate in wybutosine biosynthesis. The protein is S-adenosyl-L-methionine-dependent tRNA 4-demethylwyosine synthase TYW1B (TYW1B) of Homo sapiens (Human).